Consider the following 407-residue polypeptide: Tryptophan synthase beta chain (407 aa).

At lysine 91 the chain carries N6-(pyridoxal phosphate)lysine.

The protein belongs to the TrpB family. In terms of assembly, tetramer of two alpha and two beta chains. The cofactor is pyridoxal 5'-phosphate.

It catalyses the reaction (1S,2R)-1-C-(indol-3-yl)glycerol 3-phosphate + L-serine = D-glyceraldehyde 3-phosphate + L-tryptophan + H2O. Its pathway is amino-acid biosynthesis; L-tryptophan biosynthesis; L-tryptophan from chorismate: step 5/5. In terms of biological role, the beta subunit is responsible for the synthesis of L-tryptophan from indole and L-serine. The protein is Tryptophan synthase beta chain of Streptococcus pneumoniae (strain P1031).